Consider the following 75-residue polypeptide: Mating pheromone Er-1/Er-3 (75 aa).

The signal sequence occupies residues 1 to 19; sequence MNKLAILAIIAMVLFSANA. A propeptide spanning residues 20-35 is cleaved from the precursor; sequence FRFQSRLRSNVEAKTG. 3 disulfides stabilise this stretch: C38-C54, C45-C71, and C50-C63.

In terms of assembly, homodimer.

Its subcellular location is the secreted. The protein resides in the cell membrane. Its function is as follows. Mating ciliate pheromones (or gamones) are diffusible extracellular communication signals that distinguish different intraspecific classes of cells commonly referred to as 'mating types'. They prepare the latter for conjugation by changing their cell surface properties. The membrane-bound form promotes inter-cellular communication and adhesion for mating pair formation and may act as binding site for the secreted form. This is Mating pheromone Er-1/Er-3 (MAT1) from Euplotes raikovi.